The chain runs to 93 residues: MKISVAAIPFFLLITIALGTKTESSSRGPYHPSECCFTYTTYKIPRQRIMDYYETNSQCSKPGIVFITKRGHSVCTNPSDKWVQDYIKDMKEN.

The first 19 residues, 1 to 19 (MKISVAAIPFFLLITIALG), serve as a signal peptide directing secretion. Ser-26 is a glycosylation site (O-linked (GalNAc...) serine; partial). 2 disulfide bridges follow: Cys-35–Cys-59 and Cys-36–Cys-75.

Belongs to the intercrine beta (chemokine CC) family. Post-translationally, the N-terminal processed forms HCC-1(3-74), HCC-1(4-74) and HCC-1(9-74) are produced in small amounts by proteolytic cleavage after secretion in blood. HCC-1(1-74), but not HCC-1(3-74) and HCC-1(4-74), is partially O-glycosylated; the O-linked glycan consists of one Gal-GalNAc disaccharide, further modified by two N-acetylneuraminic acids. As to expression, expressed constitutively in several normal tissues: spleen, liver, skeletal and heart muscle, gut, and bone marrow, present at high concentrations (1-80 nM) in plasma.

The protein resides in the secreted. Functionally, has weak activities on human monocytes and acts via receptors that also recognize MIP-1 alpha. It induces intracellular Ca(2+) changes and enzyme release, but no chemotaxis, at concentrations of 100-1,000 nM, and is inactive on T-lymphocytes, neutrophils, and eosinophil leukocytes. Enhances the proliferation of CD34 myeloid progenitor cells. The processed form HCC-1(9-74) is a chemotactic factor that attracts monocytes, eosinophils, and T-cells and is a ligand for CCR1, CCR3 and CCR5. The chain is C-C motif chemokine 14 (CCL14) from Homo sapiens (Human).